The following is a 355-amino-acid chain: 6-aminohexanoate-oligomer endohydrolase (355 aa).

Residue Thr267 is the Nucleophile of the active site.

Belongs to the peptidase S58 family. In terms of assembly, heterotetramer composed of 4 alpha/beta heterodimers. Exists at the monomer/dimer/trimer equilibrium in aqueous solution. Expressed as an inactive precursor that is cleaved autocatalytically at Asn266/Thr267 to generate an active enzyme composed of an alpha subunit and a beta subunit.

The enzyme catalyses [N-(6-aminohexanoyl)]n + H2O = [N-(6-aminohexanoyl)]n-x + [N-(6-aminohexanoyl)]x.. The protein operates within xenobiotic degradation; nylon-6 oligomer degradation. Its function is as follows. Involved in the degradation of nylon-6 oligomers. Degrades cyclic and linear oligomers of 6-aminohexanoate (Ahx) with a degree of polymerization greater than three by an endo-type mode. Cannot use Ahx cyclic dimer or the Ahx linear dimer. The chain is 6-aminohexanoate-oligomer endohydrolase from Paenarthrobacter ureafaciens.